The chain runs to 415 residues: Phosphoglycerate kinase (415 aa).

(2R)-3-phosphoglycerate-binding residues include Val-22, Asp-23, Phe-24, Asn-25, Gln-37, Arg-38, Ser-61, His-62, Gly-64, Leu-120, Arg-121, His-168, and Arg-169. Gly-212 contacts ADP. Residue Gly-212 participates in CDP binding. Residues Ala-213 and Lys-214 each contribute to the AMP site. Ala-213 contributes to the ATP binding site. Ala-213 contributes to the Mg(2+) binding site. Position 217 (Asp-217) interacts with CDP. Asp-217 provides a ligand contact to Mg(2+). Residue Lys-218 coordinates AMP. Residue Lys-218 coordinates ATP. Residue Gly-236 participates in ADP binding. Gly-236 provides a ligand contact to CDP. Positions 237 and 311 each coordinate AMP. Residues Gly-237 and Gly-311 each coordinate ATP. CDP-binding residues include Gly-336 and Phe-341. Residue Phe-341 participates in ADP binding. Residue Glu-342 coordinates AMP. ATP is bound by residues Glu-342, Asp-373, and Thr-374. Asp-373 serves as a coordination point for Mg(2+).

This sequence belongs to the phosphoglycerate kinase family. As to quaternary structure, monomer. Mg(2+) serves as cofactor.

It is found in the cytoplasm. The enzyme catalyses (2R)-3-phosphoglycerate + ATP = (2R)-3-phospho-glyceroyl phosphate + ADP. It functions in the pathway carbohydrate degradation; glycolysis; pyruvate from D-glyceraldehyde 3-phosphate: step 2/5. The sequence is that of Phosphoglycerate kinase (PGK) from Opisthorchis sinensis (Clonorchis sinensis).